A 180-amino-acid chain; its full sequence is Hypoxanthine-guanine phosphoribosyltransferase (180 aa).

The diphosphate site is built by K43 and G44. Residues E99 and D100 each contribute to the Mg(2+) site. The active-site Proton acceptor is D103. GMP-binding positions include K131, F152–I153, and D159. Diphosphate is bound at residue R165.

This sequence belongs to the purine/pyrimidine phosphoribosyltransferase family. It depends on Mg(2+) as a cofactor.

It is found in the cytoplasm. It carries out the reaction IMP + diphosphate = hypoxanthine + 5-phospho-alpha-D-ribose 1-diphosphate. The catalysed reaction is GMP + diphosphate = guanine + 5-phospho-alpha-D-ribose 1-diphosphate. It functions in the pathway purine metabolism; IMP biosynthesis via salvage pathway; IMP from hypoxanthine: step 1/1. It participates in purine metabolism; GMP biosynthesis via salvage pathway; GMP from guanine: step 1/1. Its function is as follows. Purine salvage pathway enzyme that catalyzes the transfer of the ribosyl-5-phosphate group from 5-phospho-alpha-D-ribose 1-diphosphate (PRPP) to the N9 position of the 6-oxopurines hypoxanthine and guanine to form the corresponding ribonucleotides IMP (inosine 5'-monophosphate) and GMP (guanosine 5'-monophosphate), with the release of PPi. In Streptococcus mutans serotype c (strain ATCC 700610 / UA159), this protein is Hypoxanthine-guanine phosphoribosyltransferase (hpt).